Consider the following 291-residue polypeptide: Small ribosomal subunit protein uS2 (291 aa).

The tract at residues N231–K291 is disordered. The segment covering E246–E259 has biased composition (basic and acidic residues). Over residues A260–A285 the composition is skewed to low complexity.

It belongs to the universal ribosomal protein uS2 family.

The polypeptide is Small ribosomal subunit protein uS2 (Pseudarthrobacter chlorophenolicus (strain ATCC 700700 / DSM 12829 / CIP 107037 / JCM 12360 / KCTC 9906 / NCIMB 13794 / A6) (Arthrobacter chlorophenolicus)).